The primary structure comprises 212 residues: Ion-translocating oxidoreductase complex subunit G (212 aa).

A helical membrane pass occupies residues 9-29 (GFLLALFALICTGLVAAVNQQ). An FMN phosphoryl threonine modification is found at threonine 176.

The protein belongs to the RnfG family. In terms of assembly, the complex is composed of six subunits: RnfA, RnfB, RnfC, RnfD, RnfE and RnfG. FMN is required as a cofactor.

It localises to the cell inner membrane. Part of a membrane-bound complex that couples electron transfer with translocation of ions across the membrane. The protein is Ion-translocating oxidoreductase complex subunit G of Shewanella baltica (strain OS223).